Consider the following 424-residue polypeptide: Serine--tRNA ligase (424 aa).

231–233 (TAE) contacts L-serine. 262 to 264 (RSE) contributes to the ATP binding site. E285 lines the L-serine pocket. Residue 349–352 (EISS) coordinates ATP. S385 provides a ligand contact to L-serine.

The protein belongs to the class-II aminoacyl-tRNA synthetase family. Type-1 seryl-tRNA synthetase subfamily. As to quaternary structure, homodimer. The tRNA molecule binds across the dimer.

It localises to the cytoplasm. The enzyme catalyses tRNA(Ser) + L-serine + ATP = L-seryl-tRNA(Ser) + AMP + diphosphate + H(+). It carries out the reaction tRNA(Sec) + L-serine + ATP = L-seryl-tRNA(Sec) + AMP + diphosphate + H(+). It participates in aminoacyl-tRNA biosynthesis; selenocysteinyl-tRNA(Sec) biosynthesis; L-seryl-tRNA(Sec) from L-serine and tRNA(Sec): step 1/1. In terms of biological role, catalyzes the attachment of serine to tRNA(Ser). Is also able to aminoacylate tRNA(Sec) with serine, to form the misacylated tRNA L-seryl-tRNA(Sec), which will be further converted into selenocysteinyl-tRNA(Sec). In Bacillus cereus (strain ATCC 10987 / NRS 248), this protein is Serine--tRNA ligase.